A 793-amino-acid polypeptide reads, in one-letter code: MAQDQNVPLVATSPPRKRRRPPKSCDPCRRRKVRCDRKFPCGQCERARTALQCNYAPIVTASSPSGGDISHLAAPSVREGDSPPSEPADPQRPSRPSAHSSHLLPPEQHQSQNKIIQNLQRRIRRLEDQLPYPATSRTTTGPDSDVSQAQALRHLHDRVLLTEEQWSDFSQPNNLVNGWAIPAIQPRLRVTPDKTKVFGPSHWLHTAEKFQVLGKFDAKEVEPSLQGVDSRSEVAGILKDCRHLRQTMKAQESVRLNHPVPDILSTLPTQEVCDSLVDAYLRTFELIYRIVHIPTFWEDYRRFWTQPQSTSTHFLMQLVLILALGTIFYSDRSKRVNLRRLAHTWIYAAQWWLVGPSEKSTVNLEGLQVGCLLLLARQTNILPTTSWLSVGSVLRMAMVMGLHRAPDLFPALSEYQSEMRVRLWVTVLELTLLSSLDASMPLPFSLQDIDCMAPSNLDDEQFGPKTERLPRPQPSERLTESSIQILLHKSLPVRVEAVRLLNNQHRQELSYETALRLGTELRSACRDVAALFDTARNQSRHVTPSSKMAPFHLRFIDTYLRRYILFLHRPFMIQARKDPRFYLSRKVCLDSCVVIASYADHLRLPSDNLDDLSHLAIVGRGSFKGALSFDVIISLGLEIITQLEEEASTRPSGSSPPFVADHLDKMAKANRVPLIRSLEHIQEQLLQIIALGNPSLKRYNFLCAILSQIRAMESGQPIQPAIYATIKESLLKCYTLLKASHAASSPQESVESLTTGPDSLPDFDVDALDPALGLEIPSLLFFPGLMDMSGTEW.

Disordered stretches follow at residues 1–29, 60–113, and 457–476; these read MAQD…DPCR, TASS…QSQN, and LDDE…QPSE. Positions 25 to 53 form a DNA-binding region, zn(2)-C6 fungal-type; that stretch reads CDPCRRRKVRCDRKFPCGQCERARTALQC.

It is found in the nucleus. Transcription factor; part of the gene cluster that mediates the biosynthesis of oxopyrrolidines, polyketide-amino acid hybrid compounds with feature structures of tetramic acid. The protein is Transcription factor opdR of Penicillium oxalicum (strain 114-2 / CGMCC 5302) (Penicillium decumbens).